Reading from the N-terminus, the 598-residue chain is Probable translation initiation factor IF-2 (598 aa).

One can recognise a tr-type G domain in the interval 3-225 (LRCPIVSVLG…GLAQKFLEQK (223 aa)). The segment at 12–19 (GHVDHGKT) is G1. Residue 12–19 (GHVDHGKT) participates in GTP binding. Residues 37-41 (GITQH) are G2. Residues 76 to 79 (DTPG) form a G3 region. Residues 76–80 (DTPGH) and 130–133 (NKVD) each bind GTP. Residues 130–133 (NKVD) are G4. Residues 200–202 (SAM) form a G5 region.

This sequence belongs to the TRAFAC class translation factor GTPase superfamily. Classic translation factor GTPase family. IF-2 subfamily.

Function in general translation initiation by promoting the binding of the formylmethionine-tRNA to ribosomes. Seems to function along with eIF-2. This Methanococcus maripaludis (strain C5 / ATCC BAA-1333) protein is Probable translation initiation factor IF-2.